The following is a 252-amino-acid chain: F-box/SPRY domain-containing protein 1 (252 aa).

The 48-residue stretch at 1-48 (MVDPLCNYNVLESIFSYLELNDLNRCSQVCKSWYHFLNDENSDVWRWH) folds into the F-box domain. The B30.2/SPRY domain maps to 58 to 250 (VKSDLLSSVT…VSMVYLGTPL (193 aa)).

Belongs to the FBXO45/Fsn family. In terms of assembly, component of an E3 ubiquitin ligase complex composed of hiw and Fsn.

It localises to the synapse. The protein operates within protein modification; protein ubiquitination. Functionally, required in the presynaptic motoneuron to down-regulate the levels of wnd and restrain synaptic terminal growth at the neuromuscular junction (NMJ). This chain is F-box/SPRY domain-containing protein 1, found in Drosophila grimshawi (Hawaiian fruit fly).